A 174-amino-acid polypeptide reads, in one-letter code: Nicotinamide-nucleotide adenylyltransferase (174 aa).

This sequence belongs to the archaeal NMN adenylyltransferase family.

It is found in the cytoplasm. The enzyme catalyses beta-nicotinamide D-ribonucleotide + ATP + H(+) = diphosphate + NAD(+). Its pathway is cofactor biosynthesis; NAD(+) biosynthesis; NAD(+) from nicotinamide D-ribonucleotide: step 1/1. This Archaeoglobus fulgidus (strain ATCC 49558 / DSM 4304 / JCM 9628 / NBRC 100126 / VC-16) protein is Nicotinamide-nucleotide adenylyltransferase.